The chain runs to 154 residues: MIVGIGTDIVQVSRMTALLGRYGERFPRRILTGDEFKKFSVSKQPAYFLAKRFAAKEAAAKALGTGFGSGLRPCHIGVGHTERGQPFLEWQGRANELVRILGVSRGLLSLADEKEYALAFVTLLAEREGAKPGLSLERALNSLKLSGNGNGVTD.

Residues aspartate 8 and glutamate 57 each coordinate Mg(2+).

Belongs to the P-Pant transferase superfamily. AcpS family. Requires Mg(2+) as cofactor.

Its subcellular location is the cytoplasm. It carries out the reaction apo-[ACP] + CoA = holo-[ACP] + adenosine 3',5'-bisphosphate + H(+). Its function is as follows. Transfers the 4'-phosphopantetheine moiety from coenzyme A to a Ser of acyl-carrier-protein. The polypeptide is Holo-[acyl-carrier-protein] synthase (Nitrosococcus oceani (strain ATCC 19707 / BCRC 17464 / JCM 30415 / NCIMB 11848 / C-107)).